The primary structure comprises 143 residues: Hemoglobin subunit alpha-2 (143 aa).

An N-acetylserine modification is found at serine 2. The Globin domain occupies 2-143; it reads SLSSKQKATV…LALALAEKYR (142 aa). Position 60 (histidine 60) interacts with O2. A heme b-binding site is contributed by histidine 89.

This sequence belongs to the globin family. In terms of assembly, hb 2 is a heterotetramer of two alpha-2 and two beta-2 chains. As to expression, red blood cells.

In terms of biological role, involved in oxygen transport from gills to the various peripheral tissues. This is Hemoglobin subunit alpha-2 (hba2) from Gadus morhua (Atlantic cod).